The primary structure comprises 421 residues: ATP-dependent RNA helicase RhlB (421 aa).

The Q motif motif lies at 9 to 37 (QKFSDFALHPAVIEALEKKGFHNCTPIQA). In terms of domain architecture, Helicase ATP-binding spans 40 to 219 (LPLTLEGRDV…FEQMNNAEYV (180 aa)). 53 to 60 (AQTGTGKT) is an ATP binding site. The DEAD box signature appears at 165–168 (DEAD). In terms of domain architecture, Helicase C-terminal spans 245-390 (RLLQTLLEEE…VSKYNPDALM (146 aa)). The segment at 396-421 (PLRLTRARPGNGPRRNGPPRNRRRSG) is disordered. Residues 403 to 414 (RPGNGPRRNGPP) are compositionally biased toward low complexity.

It belongs to the DEAD box helicase family. RhlB subfamily. As to quaternary structure, component of the RNA degradosome, which is a multiprotein complex involved in RNA processing and mRNA degradation.

It is found in the cytoplasm. It catalyses the reaction ATP + H2O = ADP + phosphate + H(+). Functionally, DEAD-box RNA helicase involved in RNA degradation. Has RNA-dependent ATPase activity and unwinds double-stranded RNA. In Klebsiella pneumoniae subsp. pneumoniae (strain ATCC 700721 / MGH 78578), this protein is ATP-dependent RNA helicase RhlB.